The primary structure comprises 173 residues: Shikimate kinase 1 (173 aa).

14-19 is a binding site for ATP; sequence GAGKST. A Mg(2+)-binding site is contributed by S18. Positions 36, 60, and 82 each coordinate substrate. R120 is a binding site for ATP. Residue R140 participates in substrate binding. Position 157 (Q157) interacts with ATP.

Belongs to the shikimate kinase family. In terms of assembly, monomer. The cofactor is Mg(2+).

It localises to the cytoplasm. It catalyses the reaction shikimate + ATP = 3-phosphoshikimate + ADP + H(+). Its pathway is metabolic intermediate biosynthesis; chorismate biosynthesis; chorismate from D-erythrose 4-phosphate and phosphoenolpyruvate: step 5/7. Its function is as follows. Catalyzes the specific phosphorylation of the 3-hydroxyl group of shikimic acid using ATP as a cosubstrate. This is Shikimate kinase 1 from Serratia proteamaculans (strain 568).